A 156-amino-acid chain; its full sequence is Arginine repressor (156 aa).

This sequence belongs to the ArgR family.

The protein localises to the cytoplasm. It functions in the pathway amino-acid biosynthesis; L-arginine biosynthesis [regulation]. In terms of biological role, regulates arginine biosynthesis genes. The chain is Arginine repressor from Salmonella agona (strain SL483).